The primary structure comprises 839 residues: Taste receptor type 1 member 2 (839 aa).

A signal peptide spans 1–19 (MGPRAKTISSLFFLLWVLA). At 20-566 (EPAENSDFYL…VFLEWHEAPT (547 aa)) the chain is on the extracellular side. Residues asparagine 84, asparagine 248, asparagine 292, asparagine 312, asparagine 368, asparagine 428, asparagine 487, and asparagine 527 are each glycosylated (N-linked (GlcNAc...) asparagine). A helical membrane pass occupies residues 567-587 (IAVALLAALGFLSTLAILVIF). Residues 588–602 (WRHFQTPIVRSAGGP) are Cytoplasmic-facing. The chain crosses the membrane as a helical span at residues 603-623 (MCFLMLTLLLVAYMVVPVYVG). Residues 624–635 (PPKVSTCLCRQA) lie on the Extracellular side of the membrane. A helical membrane pass occupies residues 636–656 (LFPLCFTICISCIAVRSFQIV). Residues 657–681 (CAFKMASRFPRAYSYWVRYQGPYVS) lie on the Cytoplasmic side of the membrane. The chain crosses the membrane as a helical span at residues 682-702 (MAFITVLKMVIVVIGMLATGL). Topologically, residues 703–727 (SPTTRTDPDDPKITIVSCNPNYRNS) are extracellular. Residues 728–748 (LLFNTSLDLLLSVVGFSFAYM) form a helical membrane-spanning segment. At 749-760 (GKELPTNYNEAK) the chain is on the cytoplasmic side. The chain crosses the membrane as a helical span at residues 761-781 (FITLSMTFYFTSSVSLCTFMS). Residues 782–784 (AYS) are Extracellular-facing. Residues 785 to 805 (GVLVTIVDLLVTVLNLLAISL) form a helical membrane-spanning segment. At 806 to 839 (GYFGPKCYMILFYPERNTPAYFNSMIQGYTMRRD) the chain is on the cytoplasmic side.

It belongs to the G-protein coupled receptor 3 family. TAS1R subfamily. As to quaternary structure, forms heterodimers with TAS1R3.

Its subcellular location is the cell membrane. Its function is as follows. Putative taste receptor. TAS1R2/TAS1R3 recognizes diverse natural and synthetic sweeteners. The polypeptide is Taste receptor type 1 member 2 (TAS1R2) (Homo sapiens (Human)).